A 211-amino-acid polypeptide reads, in one-letter code: Phosphoribosyl-dephospho-CoA transferase (211 aa).

Catalysis depends on residues aspartate 136 and aspartate 138.

This sequence belongs to the MdcG family.

The enzyme catalyses apo-[malonate decarboxylase ACP] + 2'-(5''-triphospho-alpha-D-ribosyl)-3'-dephospho-CoA = holo-[malonate decarboxylase ACP] + diphosphate. Transfers 2'-(5-triphosphoribosyl)-3'-dephosphocoenzyme-A to the apo-[acyl-carrier-protein] of the malonate decarboxylase to yield holo-[acyl-carrier-protein]. This Pseudomonas syringae pv. tomato (strain ATCC BAA-871 / DC3000) protein is Phosphoribosyl-dephospho-CoA transferase.